The following is a 381-amino-acid chain: Cytochrome b (381 aa).

The next 4 helical transmembrane spans lie at 34 to 54 (FGSL…FLAM), 78 to 99 (WLIR…YLHI), 114 to 134 (WNIG…GYVL), and 179 to 199 (FFAF…LHFL). Positions 84 and 98 each coordinate heme b. Residues His183 and His197 each coordinate heme b. Residue His202 participates in a ubiquinone binding. A run of 4 helical transmembrane segments spans residues 227-247 (YKDI…VLFL), 289-309 (LGGV…PFLH), 321-341 (LTQL…WIGG), and 348-368 (FIFI…IITP).

The protein belongs to the cytochrome b family. The cytochrome bc1 complex contains 3 respiratory subunits (MT-CYB, CYC1 and UQCRFS1), 2 core proteins (UQCRC1 and UQCRC2) and probably 6 low-molecular weight proteins. It depends on heme b as a cofactor.

It is found in the mitochondrion inner membrane. In terms of biological role, component of the ubiquinol-cytochrome c reductase complex (complex III or cytochrome b-c1 complex) that is part of the mitochondrial respiratory chain. The b-c1 complex mediates electron transfer from ubiquinol to cytochrome c. Contributes to the generation of a proton gradient across the mitochondrial membrane that is then used for ATP synthesis. The sequence is that of Cytochrome b (mt-cyb) from Heterodontus francisci (Horn shark).